The following is a 387-amino-acid chain: Exodeoxyribonuclease 7 large subunit (387 aa).

It belongs to the XseA family. Heterooligomer composed of large and small subunits.

Its subcellular location is the cytoplasm. The enzyme catalyses Exonucleolytic cleavage in either 5'- to 3'- or 3'- to 5'-direction to yield nucleoside 5'-phosphates.. Its function is as follows. Bidirectionally degrades single-stranded DNA into large acid-insoluble oligonucleotides, which are then degraded further into small acid-soluble oligonucleotides. The sequence is that of Exodeoxyribonuclease 7 large subunit from Campylobacter hominis (strain ATCC BAA-381 / DSM 21671 / CCUG 45161 / LMG 19568 / NCTC 13146 / CH001A).